Consider the following 140-residue polypeptide: Transcription antitermination protein NusB (140 aa).

The protein belongs to the NusB family.

In terms of biological role, involved in transcription antitermination. Required for transcription of ribosomal RNA (rRNA) genes. Binds specifically to the boxA antiterminator sequence of the ribosomal RNA (rrn) operons. The sequence is that of Transcription antitermination protein NusB from Leptospira biflexa serovar Patoc (strain Patoc 1 / Ames).